The chain runs to 1033 residues: MSGSFWKFGQDYSIESPVSKILNSAFIKINKDQDDDVPTGTCEENIADDEDNSSHDYAASEDNVVNENEEKEEENTLPTTESEYENYRPNLDVLDDLLDDDELYTELMCSNFKLLIFLKYPDVLSKLIEYVTNEKILDEETDSAKKPEIIEGVNDHPILIERDRKDKKEDAEEGGDSEETTNDSDHDSGDERSVDSEETSITLPPESEEQVETRRARIAAEILSADVWPISAAIMQNKDLLGRLWSILDHPAPLPIPASTYFMKINERLLDMDITGMLEFILSRDSLVARFLTHVDNPSLMDFLLKVISTDKPDSPTGVIKILKSQELIPKLLDHLNPEYGISTQSAAGDFIKAFVTLSTNSSNELASGIGPNELTRQLVSEEMIEKLIKIMLKGGTSLSNGVGIIIELIRKNNSDYDFIQLVYTTLESHPPTDRDPIHLIHLVKLFAKHMPDFADMLDKTKLPLMEMPFGNIEPLGFERFKICELIAELLHCSNMTLLNEPNGEMIAQERDIERAKELETSTEKENITAIVDNKSSYYDKDCVEKDITENLGALQINNQGSEEDELNDTGVSSVKLDVKSDAKVVEGLENDASGVELYDETLSDTESVRECLREKPLVGDRLKIALEDTKILISILDMFTEFPWNNFLHNVIFDIAQQIFNGPLKTGYNRFLLKDYLVDAYLTKKIVDADKACQDYEKKTGLRYGYMGHLTLVAEEISKFKEYIDEMKLTFCNTAVSDRLEEPFWKEYSETILADTREKYNTVLGDFGNDQESDDDVIRNSDSEDIIGDTEGNENYGNGENDELLSNGHDSGNMDLYYNFNNNENEENEEDYAEYSDVDNKNYYNNVETNDDDYDSDDGKSKSAESEFTDKISEHRDGNSLYNEDNDENGSDKWTSGTSLFPPDHFPSRSQPSDPKLQDQNIFHHQFDFEGVGDDDDYMDPNDDGQSYARPGNPLYTTPKTPPRPKTILFNSLSALDNNGEDEEVALGTSVDDRMDNEISSDEEDSEDEDEENDMGNEEGYSLYRSRSKEAF.

Disordered stretches follow at residues 32-82 (DQDD…TTES), 147-213 (PEII…QVET), and 768-1033 (FGND…KEAF). Basic and acidic residues predominate over residues 158 to 170 (ILIERDRKDKKED). Residues 171-182 (AEEGGDSEETTN) are compositionally biased toward acidic residues. A compositionally biased stretch (basic and acidic residues) spans 183–195 (DSDHDSGDERSVD). Ser774 carries the phosphoserine modification. Composition is skewed to acidic residues over residues 784 to 793 (SEDIIGDTEG) and 825 to 838 (ENEE…EYSD). A phosphoserine mark is found at Ser857, Ser862, and Ser892. Over residues 858–879 (DDGKSKSAESEFTDKISEHRDG) the composition is skewed to basic and acidic residues. The segment covering 909 to 924 (SRSQPSDPKLQDQNIF) has biased composition (polar residues). The span at 932–944 (GVGDDDDYMDPND) shows a compositional bias: acidic residues. Residue Thr990 is modified to Phosphothreonine. Ser991 is subject to Phosphoserine. A compositionally biased stretch (acidic residues) spans 1000–1018 (ISSDEEDSEDEDEENDMGN).

The protein belongs to the SAPS family. As to quaternary structure, associates with the SIT4 protein phosphatase catalytic subunit in a cell-cycle-dependent manner. In terms of processing, hyperphosphorylated in the absence of SIT4.

It localises to the cytoplasm. Functionally, positive regulator of protein phosphatase SIT4. Involved in the general amino acid control (GAAC) response regulated by TOR. Involved in the dephosphorylation of the elongator complex subunit IKI3. This chain is SIT4-associating protein SAP190 (SAP190), found in Saccharomyces cerevisiae (strain ATCC 204508 / S288c) (Baker's yeast).